We begin with the raw amino-acid sequence, 499 residues long: Probable cytosol aminopeptidase (499 aa).

Lysine 267 and aspartate 272 together coordinate Mn(2+). Residue lysine 279 is part of the active site. Residues aspartate 290, aspartate 349, and glutamate 351 each contribute to the Mn(2+) site. Arginine 353 is a catalytic residue.

The protein belongs to the peptidase M17 family. Mn(2+) serves as cofactor.

The protein resides in the cytoplasm. The catalysed reaction is Release of an N-terminal amino acid, Xaa-|-Yaa-, in which Xaa is preferably Leu, but may be other amino acids including Pro although not Arg or Lys, and Yaa may be Pro. Amino acid amides and methyl esters are also readily hydrolyzed, but rates on arylamides are exceedingly low.. It catalyses the reaction Release of an N-terminal amino acid, preferentially leucine, but not glutamic or aspartic acids.. Functionally, presumably involved in the processing and regular turnover of intracellular proteins. Catalyzes the removal of unsubstituted N-terminal amino acids from various peptides. This chain is Probable cytosol aminopeptidase, found in Alkaliphilus oremlandii (strain OhILAs) (Clostridium oremlandii (strain OhILAs)).